The sequence spans 167 residues: Signal peptidase complex catalytic subunit SEC11 (167 aa).

Residues 1 to 9 lie on the Cytoplasmic side of the membrane; that stretch reads MNLRFELQK. Residues 10-30 traverse the membrane as a helical; Signal-anchor for type II membrane protein segment; sequence LLNVCFLFASAYMFWQGLAIA. At 31–167 the chain is on the lumenal side; it reads TNSASPIVVV…LGLSALLGGE (137 aa). Catalysis depends on charge relay system residues serine 44, histidine 83, and aspartate 109. Asparagine 121 carries an N-linked (GlcNAc...) asparagine glycan. The C-terminal short (CTS) helix stretch occupies residues 153 to 164; it reads ALLGMLGLSALL.

Belongs to the peptidase S26B family. In terms of assembly, component of the signal peptidase complex (SPC) composed of a catalytic subunit SEC11 and three accessory subunits SPC1, SPC2 and SPC3. The complex induces a local thinning of the ER membrane which is used to measure the length of the signal peptide (SP) h-region of protein substrates. This ensures the selectivity of the complex towards h-regions shorter than 18-20 amino acids. SPC associates with the translocon complex.

The protein resides in the endoplasmic reticulum membrane. The catalysed reaction is Cleavage of hydrophobic, N-terminal signal or leader sequences from secreted and periplasmic proteins.. Functionally, catalytic component of the signal peptidase complex (SPC) which catalyzes the cleavage of N-terminal signal sequences from nascent proteins as they are translocated into the lumen of the endoplasmic reticulum. Specifically cleaves N-terminal signal peptides that contain a hydrophobic alpha-helix (h-region) shorter than 18-20 amino acids. In Saccharomyces cerevisiae (strain Lalvin QA23) (Baker's yeast), this protein is Signal peptidase complex catalytic subunit SEC11 (SEC11).